The chain runs to 302 residues: Probable histone acetyltransferase Rv0428c (302 aa).

The catalysed reaction is L-lysyl-[histone] + acetyl-CoA = N(6)-acetyl-L-lysyl-[histone] + CoA + H(+). Shows histone acetyl transferase (HAT) activity with recombinant eukaryotic H3 histone expressed in bacteria as substrate and acetyl-CoA as donor. May be involved in survival under stress conditions. The protein is Probable histone acetyltransferase Rv0428c of Mycobacterium tuberculosis (strain ATCC 25618 / H37Rv).